The sequence spans 154 residues: Low molecular weight protein-tyrosine-phosphatase PtpA (154 aa).

Cys-8 acts as the Nucleophile in catalysis. Arg-14 is a catalytic residue. The Proton donor role is filled by Asp-120.

It belongs to the low molecular weight phosphotyrosine protein phosphatase family.

The catalysed reaction is O-phospho-L-tyrosyl-[protein] + H2O = L-tyrosyl-[protein] + phosphate. In terms of biological role, dephosphorylates the phosphotyrosine-containing proteins. In Staphylococcus epidermidis (strain ATCC 35984 / DSM 28319 / BCRC 17069 / CCUG 31568 / BM 3577 / RP62A), this protein is Low molecular weight protein-tyrosine-phosphatase PtpA (ptpA).